Here is a 1161-residue protein sequence, read N- to C-terminus: PAN2-PAN3 deadenylation complex catalytic subunit pan2 (1161 aa).

WD repeat units follow at residues 20–59 (GLPTIATTIAFDDVSELLWAGNEFGRITSFYGPELQRYTS), 102–145 (AHEE…DKLQ), and 276–315 (ANVSFMLGIDISPSGEALAINDAECAIHLWGSPSKVHFNE). The interval 316–452 (MSKEVEFADV…GAKLNGEAED (137 aa)) is linker. Residues 453-822 (DPLLKYSNVE…IPCVLAYQAR (370 aa)) enclose the USP domain. Positions 871-1049 (VALDTEFVDL…VEDARMALRL (179 aa)) constitute an Exonuclease domain. Residues D874, E876, D983, and D1042 each contribute to the a divalent metal cation site. The segment at 1094-1161 (GTAVTMQNNS…GDFFGGSPLK (68 aa)) is disordered. Residues 1097–1110 (VTMQNNSGRNTPST) show a composition bias toward polar residues. Residues 1116 to 1129 (AAAAAATTSAPATP) show a composition bias toward low complexity. Residues 1145-1155 (TFGGPGTGDFF) are compositionally biased toward gly residues.

The protein belongs to the peptidase C19 family. PAN2 subfamily. Forms a heterotrimer with an asymmetric homodimer of the regulatory subunit pan3 to form the poly(A)-nuclease (PAN) deadenylation complex. A divalent metal cation serves as cofactor.

Its subcellular location is the cytoplasm. It catalyses the reaction Exonucleolytic cleavage of poly(A) to 5'-AMP.. Positively regulated by the regulatory subunit pan3. Its function is as follows. Catalytic subunit of the poly(A)-nuclease (PAN) deadenylation complex, one of two cytoplasmic mRNA deadenylases involved in mRNA turnover. PAN specifically shortens poly(A) tails of RNA and the activity is stimulated by poly(A)-binding protein pab1. PAN deadenylation is followed by rapid degradation of the shortened mRNA tails by the CCR4-NOT complex. Deadenylated mRNAs are then degraded by two alternative mechanisms, namely exosome-mediated 3'-5' exonucleolytic degradation, or deadenylation-dependent mRNA decaping and subsequent 5'-3' exonucleolytic degradation by xrn1. May also be involved in post-transcriptional maturation of mRNA poly(A) tails. The protein is PAN2-PAN3 deadenylation complex catalytic subunit pan2 of Aspergillus clavatus (strain ATCC 1007 / CBS 513.65 / DSM 816 / NCTC 3887 / NRRL 1 / QM 1276 / 107).